Reading from the N-terminus, the 113-residue chain is U11-theraphotoxin-Hhn1a (113 aa).

The first 21 residues, 1 to 21 (MNTVRVTFLLVFVLAVSLGQA), serve as a signal peptide directing secretion. A propeptide spanning residues 22–74 (DKDENRMEMQEKTEQGKSYLDFAENLLLQKLEELEAKPLEEDSEESRNSRQKR) is cleaved from the precursor. Positions 57-69 (AKPLEEDSEESRN) are enriched in basic and acidic residues. Residues 57 to 83 (AKPLEEDSEESRNSRQKRCIGEGVPCD) form a disordered region. 3 cysteine pairs are disulfide-bonded: Cys-75–Cys-90, Cys-82–Cys-95, and Cys-89–Cys-110.

Belongs to the neurotoxin 14 (magi-1) family. 01 (HNTX-16) subfamily. In terms of tissue distribution, expressed by the venom gland.

It is found in the secreted. Its function is as follows. Probable ion channel inhibitor. The sequence is that of U11-theraphotoxin-Hhn1a from Cyriopagopus hainanus (Chinese bird spider).